Here is a 285-residue protein sequence, read N- to C-terminus: Eukaryotic translation initiation factor 2 subunit beta (285 aa).

The interval 30 to 69 is disordered; it reads DAAVNGKENGSGDDLFAGLKKKKKKSKSVSADAEAEKEPT. Position 40 is a phosphoserine (serine 40). The residue at position 69 (threonine 69) is a Phosphothreonine. Phosphoserine is present on residues serine 80, serine 92, and serine 112. Phosphothreonine is present on threonine 116. Serine 118 carries the post-translational modification Phosphoserine. Residues 236 to 262 form a C4-type zinc finger; the sequence is CKTCKSINTELKREQSNRLFFMVCKSC.

This sequence belongs to the eIF-2-beta/eIF-5 family. In terms of assembly, eukaryotic translation initiation factor 2 eIF2 is a heterotrimeric complex composed of an alpha, a beta and a gamma subunit. The factors eIF-1, eIF-2, eIF-3, TIF5/eIF-5 and methionyl-tRNAi form a multifactor complex (MFC) that may bind to the 40S ribosome. Interacts with GCD6. Interacts with GCD1. Interacts with TIF5/eIF-5. Interacts with CDC123.

The protein localises to the cytoplasm. The protein resides in the cytosol. Functionally, component of the eIF2 complex that functions in the early steps of protein synthesis by forming a ternary complex with GTP and initiator tRNA. This complex binds to a 40S ribosomal subunit, followed by mRNA binding to form a 43S pre-initiation complex (43S PIC). Junction of the 60S ribosomal subunit to form the 80S initiation complex is preceded by hydrolysis of the GTP bound to eIF2 and release of an eIF2-GDP binary complex. In order for eIF2 to recycle and catalyze another round of initiation, the GDP bound to eIF2 must exchange with GTP by way of a reaction catalyzed by eIF2B. The sequence is that of Eukaryotic translation initiation factor 2 subunit beta (SUI3) from Saccharomyces cerevisiae (strain ATCC 204508 / S288c) (Baker's yeast).